An 85-amino-acid polypeptide reads, in one-letter code: UPF0291 protein str0508 (85 aa).

The tract at residues 62–85 (TPEKLRQVQREKGLHGRSLDDPES) is disordered.

The protein belongs to the UPF0291 family.

It localises to the cytoplasm. The chain is UPF0291 protein str0508 from Streptococcus thermophilus (strain CNRZ 1066).